The sequence spans 105 residues: Large ribosomal subunit protein bL21 (105 aa).

Belongs to the bacterial ribosomal protein bL21 family. As to quaternary structure, part of the 50S ribosomal subunit. Contacts protein L20.

This protein binds to 23S rRNA in the presence of protein L20. The polypeptide is Large ribosomal subunit protein bL21 (Rickettsia africae (strain ESF-5)).